A 321-amino-acid polypeptide reads, in one-letter code: Cytochrome c biogenesis protein CcsA (321 aa).

8 helical membrane-spanning segments follow: residues 17-37, 43-63, 71-91, 98-118, 143-163, 225-245, 258-275, and 286-306; these read IVSIVITIHLMTLLVDGIVGL, KGMIATFLCITGFLVTRWIYS, LYESLIFLSWSFSIIHMVPKI, LSAITAPSAIFTQGFATSGLL, MVLSYAALLCGSLLSIALLVI, VISLGFIFLTIGILSGAVWAN, ETWAFITWTIFAIYLHTR, and AIVASIGFLIIWICYFGVNLL.

This sequence belongs to the CcmF/CycK/Ccl1/NrfE/CcsA family. As to quaternary structure, may interact with Ccs1.

The protein resides in the plastid. It is found in the chloroplast thylakoid membrane. Required during biogenesis of c-type cytochromes (cytochrome c6 and cytochrome f) at the step of heme attachment. The sequence is that of Cytochrome c biogenesis protein CcsA from Platanus occidentalis (Sycamore).